The primary structure comprises 186 residues: MTQQSPAFIGPAWLEREQLIDAPDPVMLDWLFNQDSLTRRLDRLSDGRFSVFPQFEGWQPLRPDECLALGLPEAGEGWVREVYLRGNGNNWVFARSVAARSALQDGGLDMDELGTRSLGELLFSDPAFVRGTLEVCHYPEAWLPAADAARGLWARRSRFDRDALSVLVAEVFLPALCTAIHDKDHV.

Positions 80, 118, and 170 each coordinate substrate.

This sequence belongs to the UbiC family.

Its subcellular location is the cytoplasm. The catalysed reaction is chorismate = 4-hydroxybenzoate + pyruvate. It participates in cofactor biosynthesis; ubiquinone biosynthesis. Its function is as follows. Removes the pyruvyl group from chorismate, with concomitant aromatization of the ring, to provide 4-hydroxybenzoate (4HB) for the ubiquinone pathway. This chain is Probable chorismate pyruvate-lyase, found in Pseudomonas syringae pv. syringae (strain B728a).